The chain runs to 294 residues: Glycine--tRNA ligase alpha subunit (294 aa).

It belongs to the class-II aminoacyl-tRNA synthetase family. Tetramer of two alpha and two beta subunits.

It localises to the cytoplasm. The catalysed reaction is tRNA(Gly) + glycine + ATP = glycyl-tRNA(Gly) + AMP + diphosphate. In Polynucleobacter asymbioticus (strain DSM 18221 / CIP 109841 / QLW-P1DMWA-1) (Polynucleobacter necessarius subsp. asymbioticus), this protein is Glycine--tRNA ligase alpha subunit.